The chain runs to 285 residues: Ribose-phosphate pyrophosphokinase (285 aa).

Residues 34–36 and 91–92 contribute to the ATP site; these read DGE and RQ. Residues H124 and D162 each contribute to the Mg(2+) site. The active site involves K185. Residues R187, D211, and 215–219 contribute to the D-ribose 5-phosphate site; that span reads STGGT.

The protein belongs to the ribose-phosphate pyrophosphokinase family. Class III (archaeal) subfamily. Mg(2+) serves as cofactor.

Its subcellular location is the cytoplasm. The catalysed reaction is D-ribose 5-phosphate + ATP = 5-phospho-alpha-D-ribose 1-diphosphate + AMP + H(+). It participates in metabolic intermediate biosynthesis; 5-phospho-alpha-D-ribose 1-diphosphate biosynthesis; 5-phospho-alpha-D-ribose 1-diphosphate from D-ribose 5-phosphate (route I): step 1/1. Its function is as follows. Involved in the biosynthesis of the central metabolite phospho-alpha-D-ribosyl-1-pyrophosphate (PRPP) via the transfer of pyrophosphoryl group from ATP to 1-hydroxyl of ribose-5-phosphate (Rib-5-P). This Pyrococcus abyssi (strain GE5 / Orsay) protein is Ribose-phosphate pyrophosphokinase.